The primary structure comprises 245 residues: Protein mlo1 (245 aa).

One can recognise an SAP domain in the interval 4–38 (YKSLKVAELREKLAEKGLSTAGNKAELVSRLTAAT). Residues 32-245 (SRLTAATESN…AERFGVAAKN (214 aa)) form a disordered region. Low complexity predominate over residues 37 to 52 (ATESNDENTSNNNATD). The span at 58–70 (PPEDDIDWGDMEN) shows a compositional bias: acidic residues. Residues 109 to 118 (TSQAPETSTG) are compositionally biased toward polar residues. Positions 119–130 (AEEHQETTEESK) are enriched in basic and acidic residues. S139 bears the Phosphoserine mark. Over residues 182-196 (SSNNKNHNQSKNPQN) the composition is skewed to low complexity.

This sequence belongs to the SAP domain-containing ribonucleoprotein family.

In Schizosaccharomyces pombe (strain 972 / ATCC 24843) (Fission yeast), this protein is Protein mlo1 (mlo1).